Here is a 399-residue protein sequence, read N- to C-terminus: 4-hydroxy-3-methylbut-2-enyl diphosphate reductase (399 aa).

Residue cysteine 66 participates in [4Fe-4S] cluster binding. Histidine 96 is a (2E)-4-hydroxy-3-methylbut-2-enyl diphosphate binding site. Histidine 96 lines the dimethylallyl diphosphate pocket. Histidine 96 lines the isopentenyl diphosphate pocket. Cysteine 157 serves as a coordination point for [4Fe-4S] cluster. Residue histidine 185 participates in (2E)-4-hydroxy-3-methylbut-2-enyl diphosphate binding. Histidine 185 provides a ligand contact to dimethylallyl diphosphate. Residue histidine 185 coordinates isopentenyl diphosphate. Residue glutamate 187 is the Proton donor of the active site. Threonine 250 is a (2E)-4-hydroxy-3-methylbut-2-enyl diphosphate binding site. Cysteine 288 contacts [4Fe-4S] cluster. (2E)-4-hydroxy-3-methylbut-2-enyl diphosphate is bound by residues serine 317, serine 318, asparagine 319, and serine 380. Dimethylallyl diphosphate-binding residues include serine 317, serine 318, asparagine 319, and serine 380. Serine 317, serine 318, asparagine 319, and serine 380 together coordinate isopentenyl diphosphate.

The protein belongs to the IspH family. The cofactor is [4Fe-4S] cluster.

It catalyses the reaction isopentenyl diphosphate + 2 oxidized [2Fe-2S]-[ferredoxin] + H2O = (2E)-4-hydroxy-3-methylbut-2-enyl diphosphate + 2 reduced [2Fe-2S]-[ferredoxin] + 2 H(+). The catalysed reaction is dimethylallyl diphosphate + 2 oxidized [2Fe-2S]-[ferredoxin] + H2O = (2E)-4-hydroxy-3-methylbut-2-enyl diphosphate + 2 reduced [2Fe-2S]-[ferredoxin] + 2 H(+). The protein operates within isoprenoid biosynthesis; dimethylallyl diphosphate biosynthesis; dimethylallyl diphosphate from (2E)-4-hydroxy-3-methylbutenyl diphosphate: step 1/1. It functions in the pathway isoprenoid biosynthesis; isopentenyl diphosphate biosynthesis via DXP pathway; isopentenyl diphosphate from 1-deoxy-D-xylulose 5-phosphate: step 6/6. In terms of biological role, catalyzes the conversion of 1-hydroxy-2-methyl-2-(E)-butenyl 4-diphosphate (HMBPP) into a mixture of isopentenyl diphosphate (IPP) and dimethylallyl diphosphate (DMAPP). Acts in the terminal step of the DOXP/MEP pathway for isoprenoid precursor biosynthesis. The chain is 4-hydroxy-3-methylbut-2-enyl diphosphate reductase from Parasynechococcus marenigrum (strain WH8102).